Reading from the N-terminus, the 316-residue chain is Lys-63-specific deubiquitinase BRCC36 (316 aa).

Ala2 is subject to N-acetylalanine. The MPN domain maps to Val12–Gln179. Positions 122, 124, and 135 each coordinate Zn(2+). Positions His122–Asp135 match the JAMM motif motif. Ser258 is subject to Phosphoserine.

The protein belongs to the peptidase M67A family. BRCC36 subfamily. Component of the ARISC complex, at least composed of UIMC1/RAP80, ABRAXAS1, BRCC3/BRCC36, BABAM2 and BABAM1/NBA1. Component of the BRCA1-A complex, at least composed of BRCA1, BARD1, UIMC1/RAP80, ABRAXAS1, BRCC3/BRCC36, babam2 and BABAM1/NBA1. In the BRCA1-A complex, interacts directly with ABRAXAS1 and babam2. Component of the BRISC complex, at least composed of ABRAXAS2, BRCC3/BRCC36, BABAM2 and BABAM1/NBA1. Identified in a complex with SHMT2 and the other subunits of the BRISC complex. In the BRISC complex, interacts directly with ABRAXAS2. Identified in a complex with ABRAXAS2 and NUMA1. The BRISC complex interacts with the CSN complex. Component of the BRCA1/BRCA2 containing complex (BRCC), which also contains BRCA1, BRCA2, BARD1, BABAM2 and RAD51. BRCC is a ubiquitin E3 ligase complex that enhances cellular survival following DNA damage. Interacts with BRCA1. Binds polyubiquitin. Interacts with PWWP2B. Interacts with HDAC1; this interaction is enhanced in the presence of PWWP2B. Requires Zn(2+) as cofactor. In terms of tissue distribution, heart, brain, placenta, lung, liver, skeletal muscle, kidney and pancreas. Aberrantly expressed in the vast majority of breast tumors.

Its subcellular location is the nucleus. It is found in the cytoplasm. It localises to the cytoskeleton. The protein resides in the spindle pole. Metalloprotease that specifically cleaves 'Lys-63'-linked polyubiquitin chains. Does not have activity toward 'Lys-48'-linked polyubiquitin chains. Component of the BRCA1-A complex, a complex that specifically recognizes 'Lys-63'-linked ubiquitinated histones H2A and H2AX at DNA lesions sites, leading to target the BRCA1-BARD1 heterodimer to sites of DNA damage at double-strand breaks (DSBs). In the BRCA1-A complex, it specifically removes 'Lys-63'-linked ubiquitin on histones H2A and H2AX, antagonizing the RNF8-dependent ubiquitination at double-strand breaks (DSBs). Catalytic subunit of the BRISC complex, a multiprotein complex that specifically cleaves 'Lys-63'-linked ubiquitin in various substrates. Mediates the specific 'Lys-63'-specific deubiquitination associated with the COP9 signalosome complex (CSN), via the interaction of the BRISC complex with the CSN complex. The BRISC complex is required for normal mitotic spindle assembly and microtubule attachment to kinetochores via its role in deubiquitinating NUMA1. Plays a role in interferon signaling via its role in the deubiquitination of the interferon receptor IFNAR1; deubiquitination increases IFNAR1 activity by enhancing its stability and cell surface expression. Acts as a regulator of the NLRP3 inflammasome by mediating deubiquitination of NLRP3, leading to NLRP3 inflammasome assembly. Down-regulates the response to bacterial lipopolysaccharide (LPS) via its role in IFNAR1 deubiquitination. Deubiquitinates HDAC1 and PWWP2B leading to their stabilization. The chain is Lys-63-specific deubiquitinase BRCC36 (BRCC3) from Homo sapiens (Human).